Here is a 127-residue protein sequence, read N- to C-terminus: Fluoride-specific ion channel FluC (127 aa).

The next 4 helical transmembrane spans lie at 2-22 (LSSL…RWAI), 35-55 (LGTL…IAIF), 68-88 (LITT…LEVV), and 104-124 (LLNL…VVWI). Na(+)-binding residues include glycine 75 and threonine 78.

Belongs to the fluoride channel Fluc/FEX (TC 1.A.43) family.

The protein resides in the cell inner membrane. The catalysed reaction is fluoride(in) = fluoride(out). Its activity is regulated as follows. Na(+) is not transported, but it plays an essential structural role and its presence is essential for fluoride channel function. Fluoride-specific ion channel. Important for reducing fluoride concentration in the cell, thus reducing its toxicity. The chain is Fluoride-specific ion channel FluC from Serratia proteamaculans (strain 568).